The chain runs to 320 residues: ATP-dependent 6-phosphofructokinase (320 aa).

Glycine 12 lines the ATP pocket. 22–26 provides a ligand contact to ADP; that stretch reads RGVVR. ATP-binding positions include 73 to 74 and 103 to 106; these read RF and GDGS. Aspartate 104 contributes to the Mg(2+) binding site. 126-128 lines the substrate pocket; that stretch reads TID. Aspartate 128 acts as the Proton acceptor in catalysis. Arginine 155 contacts ADP. Substrate is bound by residues arginine 163 and 170–172; that span reads MGR. ADP-binding positions include 186 to 188, lysine 212, and 214 to 216; these read GCE and KKH. Substrate contacts are provided by residues glutamate 223, arginine 244, and 250–253; that span reads HIQR.

The protein belongs to the phosphofructokinase type A (PFKA) family. ATP-dependent PFK group I subfamily. Prokaryotic clade 'B1' sub-subfamily. In terms of assembly, homotetramer. Mg(2+) is required as a cofactor.

It localises to the cytoplasm. The enzyme catalyses beta-D-fructose 6-phosphate + ATP = beta-D-fructose 1,6-bisphosphate + ADP + H(+). It functions in the pathway carbohydrate degradation; glycolysis; D-glyceraldehyde 3-phosphate and glycerone phosphate from D-glucose: step 3/4. With respect to regulation, allosterically activated by ADP and other diphosphonucleosides, and allosterically inhibited by phosphoenolpyruvate. Functionally, catalyzes the phosphorylation of D-fructose 6-phosphate to fructose 1,6-bisphosphate by ATP, the first committing step of glycolysis. The polypeptide is ATP-dependent 6-phosphofructokinase (Vibrio cholerae serotype O1 (strain ATCC 39315 / El Tor Inaba N16961)).